A 123-amino-acid chain; its full sequence is Unknown 12C protein (123 aa).

A signal peptide spans 1–17 (MMSALFLVLSVSLLVSG).

In terms of processing, contains 6 disulfide bonds. As to expression, expressed in acontia, a specialised envenomation structure laden with batteries of venom-containing nematocysts found only in the superfamily Metridioidea.

The protein resides in the secreted. The protein localises to the nematocyst. In terms of biological role, cysteine-rich protein with probable toxin activity. The sequence is that of Unknown 12C protein from Calliactis polypus (Hermit crab anemone).